Consider the following 550-residue polypeptide: Arginine--tRNA ligase (550 aa).

The 'HIGH' region motif lies at 130–140; the sequence is ANPTGPIHLGG.

Belongs to the class-I aminoacyl-tRNA synthetase family. As to quaternary structure, monomer.

It is found in the cytoplasm. It carries out the reaction tRNA(Arg) + L-arginine + ATP = L-arginyl-tRNA(Arg) + AMP + diphosphate. In Corynebacterium diphtheriae (strain ATCC 700971 / NCTC 13129 / Biotype gravis), this protein is Arginine--tRNA ligase.